A 355-amino-acid polypeptide reads, in one-letter code: N6-mAMP deaminase (355 aa).

The Zn(2+) site is built by His13 and His15. N(6)-methyl-AMP-binding positions include His15, Asn17, His65, 97 to 100, Asp160, and Gly190; that span reads TTPK. His217 serves as a coordination point for Zn(2+). N(6)-methyl-AMP contacts are provided by Glu220, Asp295, and Asp296. Residue Glu220 is the Proton donor of the active site. Asp295 is a Zn(2+) binding site.

This sequence belongs to the metallo-dependent hydrolases superfamily. Adenosine and AMP deaminases family. As to quaternary structure, monomer. Zn(2+) is required as a cofactor.

It localises to the cytoplasm. Its subcellular location is the cytosol. It catalyses the reaction N(6)-methyl-AMP + H2O + H(+) = IMP + methylamine. Catalyzes the hydrolysis of the free cytosolic methylated adenosine nucleotide N(6)-methyl-AMP (N6-mAMP) to produce inositol monophosphate (IMP) and methylamine. Is required for the catabolism of cytosolic N6-mAMP, which is derived from the degradation of mRNA containing N6-methylated adenine (m6A). Does not possess deaminase activity toward adenosine, AMP, N6-methyladenosine, or N6-mATP in vitro. This chain is N6-mAMP deaminase, found in Arabidopsis thaliana (Mouse-ear cress).